We begin with the raw amino-acid sequence, 553 residues long: Hydroxylamine reductase (553 aa).

4 residues coordinate [2Fe-2S] cluster: Cys3, Cys6, Cys18, and Cys25. Residues His249, Glu273, Cys317, Cys405, Cys433, Cys459, Glu493, and Lys495 each contribute to the hybrid [4Fe-2O-2S] cluster site. Residue Cys405 is modified to Cysteine persulfide.

It belongs to the HCP family. The cofactor is [2Fe-2S] cluster. Hybrid [4Fe-2O-2S] cluster serves as cofactor.

The protein resides in the cytoplasm. The enzyme catalyses A + NH4(+) + H2O = hydroxylamine + AH2 + H(+). In terms of biological role, catalyzes the reduction of hydroxylamine to form NH(3) and H(2)O. This Mannheimia succiniciproducens (strain KCTC 0769BP / MBEL55E) protein is Hydroxylamine reductase.